The primary structure comprises 537 residues: Bifunctional purine biosynthesis protein PurH (537 aa).

Positions 11-158 (ADIQRVRRAL…KNHAYVGVIV (148 aa)) constitute an MGS-like domain.

Belongs to the PurH family.

It carries out the reaction (6R)-10-formyltetrahydrofolate + 5-amino-1-(5-phospho-beta-D-ribosyl)imidazole-4-carboxamide = 5-formamido-1-(5-phospho-D-ribosyl)imidazole-4-carboxamide + (6S)-5,6,7,8-tetrahydrofolate. The enzyme catalyses IMP + H2O = 5-formamido-1-(5-phospho-D-ribosyl)imidazole-4-carboxamide. It functions in the pathway purine metabolism; IMP biosynthesis via de novo pathway; 5-formamido-1-(5-phospho-D-ribosyl)imidazole-4-carboxamide from 5-amino-1-(5-phospho-D-ribosyl)imidazole-4-carboxamide (10-formyl THF route): step 1/1. Its pathway is purine metabolism; IMP biosynthesis via de novo pathway; IMP from 5-formamido-1-(5-phospho-D-ribosyl)imidazole-4-carboxamide: step 1/1. This chain is Bifunctional purine biosynthesis protein PurH, found in Parvibaculum lavamentivorans (strain DS-1 / DSM 13023 / NCIMB 13966).